The primary structure comprises 102 residues: Small ribosomal subunit protein uS10 (102 aa).

Belongs to the universal ribosomal protein uS10 family. As to quaternary structure, part of the 30S ribosomal subunit.

Involved in the binding of tRNA to the ribosomes. In Opitutus terrae (strain DSM 11246 / JCM 15787 / PB90-1), this protein is Small ribosomal subunit protein uS10.